Reading from the N-terminus, the 816-residue chain is Bifunctional aspartokinase/homoserine dehydrogenase (816 aa).

An aspartokinase region spans residues 1 to 250 (MKLLKFGGTS…VPNARLLKSI (250 aa)). Positions 251–471 (SYQEAMELSY…FNKKTIHMFL (221 aa)) are interface. Residues 402-479 (IVGSNIYKKH…FLIGIGGIGS (78 aa)) enclose the ACT domain. Residues 472-816 (IGIGGIGSTL…VFSDLLRTLS (345 aa)) form a homoserine dehydrogenase region. 3 residues coordinate NAD(+): Gly476, Ile477, and Ala505. Ile477 serves as a coordination point for NADP(+). Ile477 is a binding site for NADPH. NADP(+) contacts are provided by Lys508 and Thr556. Position 556 (Thr556) interacts with NAD(+). Thr556, Ser557, Ser578, and Lys580 together coordinate NADPH. Residues Ser578 and Lys580 each coordinate NADP(+). Na(+) contacts are provided by Glu607, Val610, Ala612, and Leu614. NADP(+)-binding residues include Gly665 and Glu668. 2 residues coordinate L-homoserine: Glu668 and Asp679. Lys683 serves as the catalytic Proton donor. Gly799 lines the NAD(+) pocket. Gly799 is a binding site for NADP(+). Residue Gly799 participates in NADPH binding.

This sequence in the N-terminal section; belongs to the aspartokinase family. The protein in the C-terminal section; belongs to the homoserine dehydrogenase family. Homotetramer. A metal cation serves as cofactor.

It carries out the reaction L-homoserine + NADP(+) = L-aspartate 4-semialdehyde + NADPH + H(+). The catalysed reaction is L-homoserine + NAD(+) = L-aspartate 4-semialdehyde + NADH + H(+). It catalyses the reaction L-aspartate + ATP = 4-phospho-L-aspartate + ADP. Its pathway is amino-acid biosynthesis; L-lysine biosynthesis via DAP pathway; (S)-tetrahydrodipicolinate from L-aspartate: step 1/4. It functions in the pathway amino-acid biosynthesis; L-methionine biosynthesis via de novo pathway; L-homoserine from L-aspartate: step 1/3. It participates in amino-acid biosynthesis; L-methionine biosynthesis via de novo pathway; L-homoserine from L-aspartate: step 3/3. The protein operates within amino-acid biosynthesis; L-threonine biosynthesis; L-threonine from L-aspartate: step 1/5. Its pathway is amino-acid biosynthesis; L-threonine biosynthesis; L-threonine from L-aspartate: step 3/5. In terms of biological role, bifunctional aspartate kinase and homoserine dehydrogenase that catalyzes the first and the third steps toward the synthesis of lysine, methionine and threonine from aspartate. This chain is Bifunctional aspartokinase/homoserine dehydrogenase (thrA), found in Buchnera aphidicola subsp. Acyrthosiphon pisum (strain APS) (Acyrthosiphon pisum symbiotic bacterium).